Reading from the N-terminus, the 135-residue chain is Membrane-anchored ubiquitin-fold protein 4 (135 aa).

The segment at 1–20 (MAEKEEGKVAAEGGAEAEAD) is disordered. The 70-residue stretch at 23–92 (VEVKFRLFDG…NDKNIAQCRA (70 aa)) folds into the Ubiquitin-like domain. Residue cysteine 132 is modified to Cysteine methyl ester. The S-geranylgeranyl cysteine moiety is linked to residue cysteine 132. Positions 133-135 (TIL) are cleaved as a propeptide — removed in mature form.

The protein resides in the cell membrane. Its function is as follows. May serve as docking site to facilitate the association of other proteins to the plasma membrane. This is Membrane-anchored ubiquitin-fold protein 4 (MUB4) from Oryza sativa subsp. japonica (Rice).